Reading from the N-terminus, the 118-residue chain is Large ribosomal subunit protein bL19 (118 aa).

It belongs to the bacterial ribosomal protein bL19 family.

In terms of biological role, this protein is located at the 30S-50S ribosomal subunit interface and may play a role in the structure and function of the aminoacyl-tRNA binding site. The protein is Large ribosomal subunit protein bL19 of Frankia alni (strain DSM 45986 / CECT 9034 / ACN14a).